Consider the following 457-residue polypeptide: Multidrug resistance protein MdtK (457 aa).

The next 12 membrane-spanning stretches (helical) occupy residues 11 to 31 (LLALAIPVILAQIAQTAMGFV), 53 to 73 (IWLPAILFGHGLLLALTPVIA), 93 to 113 (WLAGFVSVLIMLVLWNAGYII), 127 to 147 (AVGYLRALLWGAPGYLFFQVA), 160 to 180 (GMVMGFIGLLVNIPVNYIFIY), 189 to 209 (GGVGCGVATAAVYWVMFLAMV), 243 to 263 (LPIALALFFEVTLFAVVALLV), 276 to 296 (IALNFSSLMFVLPMSLAAAVT), 314 to 334 (AARTGLMVGVCMATLTAIFTV), 350 to 370 (VVTLAAHLMLLAAVYQISDSI), 387 to 407 (IFYITFTAYWVLGLPSGYILA), and 418 to 438 (PAGFWIGFIIGLTSAAIMMML).

It belongs to the multi antimicrobial extrusion (MATE) (TC 2.A.66.1) family. MdtK subfamily.

It localises to the cell inner membrane. Functionally, multidrug efflux pump that functions probably as a Na(+)/drug antiporter. The chain is Multidrug resistance protein MdtK from Escherichia coli O17:K52:H18 (strain UMN026 / ExPEC).